A 217-amino-acid chain; its full sequence is Ras-related protein RABA2d (217 aa).

19 to 26 provides a ligand contact to GTP; sequence GDSGVGKT. The Effector region signature appears at 41-49; the sequence is SKSTIGVEF. Residues 67–71, 125–128, and 155–156 contribute to the GTP site; these read DTAGQ, NKAD, and SA. A disordered region spans residues 196–217; the sequence is GQGTTINVEDTSGAGKRGCCST. 2 S-geranylgeranyl cysteine lipidation sites follow: C214 and C215.

It belongs to the small GTPase superfamily. Rab family. In terms of tissue distribution, expressed in root tips.

Its subcellular location is the endosome membrane. It localises to the golgi apparatus. The protein resides in the trans-Golgi network membrane. In terms of biological role, intracellular vesicle trafficking and protein transport. This Arabidopsis thaliana (Mouse-ear cress) protein is Ras-related protein RABA2d (RABA2D).